The chain runs to 506 residues: Protein MGF 505-9R (506 aa).

Belongs to the asfivirus MGF 505 family.

Its function is as follows. Plays a role in virus cell tropism, and may be required for efficient virus replication in macrophages. The chain is Protein MGF 505-9R from Ornithodoros (relapsing fever ticks).